A 156-amino-acid polypeptide reads, in one-letter code: Small ribosomal subunit protein uS7c (156 aa).

Belongs to the universal ribosomal protein uS7 family. Part of the 30S ribosomal subunit.

Its subcellular location is the plastid. The protein localises to the chloroplast. Its function is as follows. One of the primary rRNA binding proteins, it binds directly to 16S rRNA where it nucleates assembly of the head domain of the 30S subunit. The chain is Small ribosomal subunit protein uS7c (rps7) from Cycas revoluta (Sago palm).